The primary structure comprises 706 residues: Probable cyclic nucleotide-gated ion channel 3 (706 aa).

Residues 1 to 85 (MMNPQRNKFV…NDSYLQSWNK (85 aa)) lie on the Cytoplasmic side of the membrane. The chain crosses the membrane as a helical span at residues 86–106 (IFLLLSVVALAFDPLFFYIPY). The Extracellular segment spans residues 107-119 (VKPERFCLNLDKK). The helical transmembrane segment at 120–140 (LQTIACVFRTFIDAFYVVHML) threads the bilayer. At 141-174 (FQFHTGFITPSSSGFGRGELNEKHKDIALRYLGS) the chain is on the cytoplasmic side. The chain crosses the membrane as a helical span at residues 175 to 195 (YFLIDLLSILPIPQVVVLAIV). Topologically, residues 196 to 208 (PRMRRPASLVAKE) are extracellular. A helical transmembrane segment spans residues 209-229 (LLKWVIFCQYVPRIARIYPLF). At 230–247 (KEVTRTSGLVTETAWAGA) the chain is on the cytoplasmic side. A helical membrane pass occupies residues 248 to 268 (ALNLFLYMLASHVFGSFWYLI). Over 269–371 (SIERKDRCWR…QNLKTSAFEG (103 aa)) the chain is Extracellular. The chain crosses the membrane as a helical span at residues 372–392 (EIIFAIVICISGLVLFALLIG). Residues 393-706 (NMQKYLQSTT…ADPEFPMDET (314 aa)) lie on the Cytoplasmic side of the membrane. A nucleoside 3',5'-cyclic phosphate contacts are provided by residues 477 to 600 (WFQA…KQLR) and aspartate 548. Positions 591–606 (YRRLHSKQLRHMFRFY) are calmodulin-binding. The region spanning 611-640 (QTWAACFIQAAWKRHCRRKLSKALREEEGK) is the IQ domain.

The protein belongs to the cyclic nucleotide-gated cation channel (TC 1.A.1.5) family. As to quaternary structure, homotetramer or heterotetramer.

It is found in the cell membrane. Functionally, probable cyclic nucleotide-gated ion channel. This Arabidopsis thaliana (Mouse-ear cress) protein is Probable cyclic nucleotide-gated ion channel 3 (CNGC3).